The sequence spans 221 residues: Thiamine-phosphate synthase (221 aa).

Residues 49-53 (QFREK) and Asn85 each bind 4-amino-2-methyl-5-(diphosphooxymethyl)pyrimidine. Mg(2+) is bound by residues Asp86 and Asp105. Position 124 (Ser124) interacts with 4-amino-2-methyl-5-(diphosphooxymethyl)pyrimidine. Position 151 to 153 (151 to 153 (TQS)) interacts with 2-[(2R,5Z)-2-carboxy-4-methylthiazol-5(2H)-ylidene]ethyl phosphate. Lys154 is a 4-amino-2-methyl-5-(diphosphooxymethyl)pyrimidine binding site. 2-[(2R,5Z)-2-carboxy-4-methylthiazol-5(2H)-ylidene]ethyl phosphate-binding positions include Gly183 and 203–204 (IS).

The protein belongs to the thiamine-phosphate synthase family. Requires Mg(2+) as cofactor.

The enzyme catalyses 2-[(2R,5Z)-2-carboxy-4-methylthiazol-5(2H)-ylidene]ethyl phosphate + 4-amino-2-methyl-5-(diphosphooxymethyl)pyrimidine + 2 H(+) = thiamine phosphate + CO2 + diphosphate. It carries out the reaction 2-(2-carboxy-4-methylthiazol-5-yl)ethyl phosphate + 4-amino-2-methyl-5-(diphosphooxymethyl)pyrimidine + 2 H(+) = thiamine phosphate + CO2 + diphosphate. The catalysed reaction is 4-methyl-5-(2-phosphooxyethyl)-thiazole + 4-amino-2-methyl-5-(diphosphooxymethyl)pyrimidine + H(+) = thiamine phosphate + diphosphate. It functions in the pathway cofactor biosynthesis; thiamine diphosphate biosynthesis; thiamine phosphate from 4-amino-2-methyl-5-diphosphomethylpyrimidine and 4-methyl-5-(2-phosphoethyl)-thiazole: step 1/1. Its function is as follows. Condenses 4-methyl-5-(beta-hydroxyethyl)thiazole monophosphate (THZ-P) and 2-methyl-4-amino-5-hydroxymethyl pyrimidine pyrophosphate (HMP-PP) to form thiamine monophosphate (TMP). In Histophilus somni (strain 129Pt) (Haemophilus somnus), this protein is Thiamine-phosphate synthase.